A 264-amino-acid polypeptide reads, in one-letter code: Triosephosphate isomerase (264 aa).

13-15 (NWK) provides a ligand contact to substrate. Catalysis depends on His-106, which acts as the Electrophile. The Proton acceptor role is filled by Glu-179. Residues Gly-185, Ser-223, and 244–245 (GG) each bind substrate.

Belongs to the triosephosphate isomerase family. In terms of assembly, homodimer.

Its subcellular location is the cytoplasm. The catalysed reaction is D-glyceraldehyde 3-phosphate = dihydroxyacetone phosphate. Its pathway is carbohydrate biosynthesis; gluconeogenesis. It participates in carbohydrate degradation; glycolysis; D-glyceraldehyde 3-phosphate from glycerone phosphate: step 1/1. Functionally, involved in the gluconeogenesis. Catalyzes stereospecifically the conversion of dihydroxyacetone phosphate (DHAP) to D-glyceraldehyde-3-phosphate (G3P). The sequence is that of Triosephosphate isomerase from Acinetobacter baumannii (strain SDF).